Reading from the N-terminus, the 253-residue chain is 2-C-methyl-D-erythritol 4-phosphate cytidylyltransferase (253 aa).

Positions 1 to 28 (MSVSSRPGRRRFALIPSAGTGTRAGGDL) are disordered.

It belongs to the IspD/TarI cytidylyltransferase family. IspD subfamily.

It catalyses the reaction 2-C-methyl-D-erythritol 4-phosphate + CTP + H(+) = 4-CDP-2-C-methyl-D-erythritol + diphosphate. Its pathway is isoprenoid biosynthesis; isopentenyl diphosphate biosynthesis via DXP pathway; isopentenyl diphosphate from 1-deoxy-D-xylulose 5-phosphate: step 2/6. Functionally, catalyzes the formation of 4-diphosphocytidyl-2-C-methyl-D-erythritol from CTP and 2-C-methyl-D-erythritol 4-phosphate (MEP). The chain is 2-C-methyl-D-erythritol 4-phosphate cytidylyltransferase from Ralstonia nicotianae (strain ATCC BAA-1114 / GMI1000) (Ralstonia solanacearum).